Reading from the N-terminus, the 255-residue chain is Glutamate racemase (255 aa).

Residues 7–8 and 39–40 contribute to the substrate site; these read DS and YG. Cys70 (proton donor/acceptor) is an active-site residue. 71–72 contacts substrate; that stretch reads NT. Cys181 (proton donor/acceptor) is an active-site residue. 182-183 lines the substrate pocket; it reads TH.

The protein belongs to the aspartate/glutamate racemases family. As to quaternary structure, homodimer.

The enzyme catalyses L-glutamate = D-glutamate. It participates in cell wall biogenesis; peptidoglycan biosynthesis. Functionally, provides the (R)-glutamate required for cell wall biosynthesis. The sequence is that of Glutamate racemase from Helicobacter pylori (strain J99 / ATCC 700824) (Campylobacter pylori J99).